We begin with the raw amino-acid sequence, 396 residues long: S-arrestin (396 aa).

Belongs to the arrestin family.

Functionally, arrestin is one of the major proteins of the ros (retinal rod outer segments); it binds to photoactivated-phosphorylated rhodopsin, thereby apparently preventing the transducin-mediated activation of phosphodiesterase. In Aquarana catesbeiana (American bullfrog), this protein is S-arrestin.